We begin with the raw amino-acid sequence, 84 residues long: MPTRRTPKPGQRKKPNILRERGITYVDYKDVALLRQFISDRGKIRARRITGLTPRQHREVTRAIKNAREMALLPYPGPAAARGR.

Belongs to the bacterial ribosomal protein bS18 family. In terms of assembly, part of the 30S ribosomal subunit. Forms a tight heterodimer with protein bS6.

Binds as a heterodimer with protein bS6 to the central domain of the 16S rRNA, where it helps stabilize the platform of the 30S subunit. This is Small ribosomal subunit protein bS18A from Frankia alni (strain DSM 45986 / CECT 9034 / ACN14a).